A 521-amino-acid polypeptide reads, in one-letter code: GMC-type oxidoreductase acuG (521 aa).

FAD-binding positions include 14–15 (TV), 34–35 (EA), Leu82, 90–93 (NYGL), Ala492, and 503–504 (YQ).

It belongs to the GMC oxidoreductase family. Requires FAD as cofactor.

It participates in secondary metabolite biosynthesis. Its function is as follows. GMC-type oxidoreductase; part of the gene cluster that mediates the biosynthesis of aculins. The pathway begins with the synthesis of 6-methylsalicylic acid by the polyketide synthase (PKS) acuA via condensation of acetate and malonate units. The 6-methylsalicylic acid decarboxylase acuB then catalyzes the decarboxylation of 6-methylsalicylic acid to yield m-cresol (also known as 3-methylphenol). These first reactions occur in the cytosol. The intermediate m-cresol is then transported into the endoplasmic reticulum where the cytochrome P450 monooxygenase acuC converts it to m-hydroxybenzyl alcohol, which is further converted to gentisyl alcohol by the cytochrome P450 monooxygenase acuD. Gentisyl alcohol is further oxidized by the oxidoreductase acuE that probably catalyzes hydroxylation of the aromatic ring. The aromatic system might then be opened by oxidation through a Baeyer-Villiger type of oxidation, which could be catalyzed by acuF, with the carboxylic acid at C-1 subsequently reduced to an aldehyde by acuG. Subsequently, a hemiacetal is formed, before the dehydrogenase acuH would reduce the double bond between C-4 and C-6. Finally, keto-enol tautomerism results in formation of aculinic acid, which exists as two diastereomers (both R/S configurations at C-1) by non-enzymatic hemiacetal formation. The carboxypeptidase acuI could be involved in the linking of aculinic acid to an aculene A moiety produced by the aculene biosynthesis cluster and which leads to the production of aculin A. AcuI may also be involved in the attachment of proline to aculinic acid to form epi-aculins A and B. The protein is GMC-type oxidoreductase acuG of Aspergillus aculeatus (strain ATCC 16872 / CBS 172.66 / WB 5094).